Reading from the N-terminus, the 165-residue chain is MSIDVNNESGTEVDEQAILDIARYALARMRIHPLSELSVIVVDAEAMEQLHIQWMDLPGPTDVMSFPMDELRPPSKDEEEAPQGLLGDIVLCPEVAAKQGAEAPTEHSMDEELQLLTVHGVLHLLGYDHEEPDEKAEMFGLQAAIVDGWRAEKGLTGPSPAPTVS.

The Zn(2+) site is built by H119, H123, and H129.

Belongs to the endoribonuclease YbeY family. Requires Zn(2+) as cofactor.

The protein resides in the cytoplasm. Its function is as follows. Single strand-specific metallo-endoribonuclease involved in late-stage 70S ribosome quality control and in maturation of the 3' terminus of the 16S rRNA. The polypeptide is Endoribonuclease YbeY (Streptomyces coelicolor (strain ATCC BAA-471 / A3(2) / M145)).